The primary structure comprises 422 residues: Methylaspartate ammonia-lyase (422 aa).

A (2S,3S)-3-methyl-L-aspartate-binding site is contributed by Gln-175. Residues Asp-239, Glu-276, and Asp-310 each coordinate Mg(2+). Gln-332 serves as a coordination point for (2S,3S)-3-methyl-L-aspartate. Catalysis depends on Lys-334, which acts as the Proton acceptor. Residue 363 to 364 (TC) coordinates (2S,3S)-3-methyl-L-aspartate.

Belongs to the methylaspartate ammonia-lyase family. Homodimer. The cofactor is Mg(2+).

It catalyses the reaction (2S,3S)-3-methyl-L-aspartate = mesaconate + NH4(+). The protein operates within amino-acid degradation; L-glutamate degradation via mesaconate pathway; acetate and pyruvate from L-glutamate: step 2/4. Functionally, involved in the methylaspartate cycle. Catalyzes the formation of the alpha,beta-unsaturated bond by the reversible anti elimination of ammonia from L-threo-beta-methylaspartate (L-threo-(2S,3S)-3-methylaspartate) to give mesaconate. This Haloarcula marismortui (strain ATCC 43049 / DSM 3752 / JCM 8966 / VKM B-1809) (Halobacterium marismortui) protein is Methylaspartate ammonia-lyase (mal).